A 287-amino-acid chain; its full sequence is Probable 18S rRNA (guanine-N(7))-methyltransferase (287 aa).

Residues 214-287 are disordered; the sequence is GVEGEEYEQQ…FSGRKRGPKF (74 aa). Residues 217-228 are compositionally biased toward acidic residues; it reads GEEYEQQEEEDS. A compositionally biased stretch (basic residues) spans 234–245; the sequence is SNRKRDRRRVTK. Positions 253 to 278 are enriched in basic and acidic residues; the sequence is KTKEWIMNKKDRQRKQGREIKNDSKF.

This sequence belongs to the class I-like SAM-binding methyltransferase superfamily. BUD23/WBSCR22 family.

The protein localises to the nucleus. Its subcellular location is the nucleoplasm. The protein resides in the cytoplasm. It localises to the perinuclear region. The catalysed reaction is a guanosine in 18S rRNA + S-adenosyl-L-methionine = an N(7)-methylguanosine in 18S rRNA + S-adenosyl-L-homocysteine. In terms of biological role, S-adenosyl-L-methionine-dependent methyltransferase that specifically methylates the N(7) position of a guanine in 18S rRNA. Important for biogenesis end export of the 40S ribosomal subunit independent on its methyltransferase activity. Its function is as follows. S-adenosyl-L-methionine-dependent methyltransferase that specifically methylates the N(7) position of a guanine in 18S rRNA. Requires the methyltransferase adapter protein TRM112 for full rRNA methyltransferase activity. Involved in the pre-rRNA processing steps leading to small-subunit rRNA production independently of its RNA-modifying catalytic activity. Important for biogenesis end export of the 40S ribosomal subunit independent on its methyltransferase activity. This chain is Probable 18S rRNA (guanine-N(7))-methyltransferase, found in Dictyostelium discoideum (Social amoeba).